We begin with the raw amino-acid sequence, 221 residues long: MYFILTKDSFKDSPFLKFITVLLPYLHPPVLHLLLLHTNWRKTHKSKHTILYCLVNLLLLAFAVANILSIVALIVDKQKRTDDLLLHSIILPSFFIPPAYLLSTSCCLVPGQIGFTDTGINVIIDILILICPAISLVLVDEKSKYYPYSTAIPSILILVRLFREKCSPPKQSSPPIPTWRVAAFVFILVLAVLVYGLLGSGSIITLYDHFHPPKGADATSS.

It belongs to the UPF0328 family.

This Encephalitozoon cuniculi (strain GB-M1) (Microsporidian parasite) protein is UPF0328 protein ECU11_2110.